Here is a 533-residue protein sequence, read N- to C-terminus: (E)-beta-farnesene synthase (533 aa).

5 residues coordinate Mg(2+): D286, D290, N430, S434, and E438. The DDXXD motif motif lies at 286-290 (DDMMD).

It belongs to the terpene synthase family. Requires Mg(2+) as cofactor. It depends on Co(2+) as a cofactor. Mn(2+) is required as a cofactor.

Its subcellular location is the cytoplasm. The catalysed reaction is (2E,6E)-farnesyl diphosphate = (E)-beta-farnesene + diphosphate. Its pathway is secondary metabolite biosynthesis; terpenoid biosynthesis. In terms of biological role, sesquiterpene cyclase catalyzing the production of sixfold more beta-farnesene than alpha-bergamotene from farnesyl diphosphate. Involved in indirect defense by producing volatile signals attracting natural enemies of herbivores. In Zea perennis (Perennial teosinte), this protein is (E)-beta-farnesene synthase.